Consider the following 544-residue polypeptide: Propane 2-monooxygenase, hydroxylase component large subunit (544 aa).

The Fe cation site is built by Glu-97, Glu-127, His-130, Glu-192, Glu-226, and His-229.

This sequence belongs to the TmoA/XamoA family. The propane 2-monooxygenase multicomponent enzyme system is composed of an electron transfer component and a monooxygenase component interacting with the effector protein PrmD. The electron transfer component is composed of a reductase (PrmB), and the monooxygenase component is formed by a large subunit (PrmA) and a small subunit (PrmC). Probably requires the presence of the chaperonin-like protein PrmG to ensure a productive folding, resulting of a soluble PrmA, which leads to the active form of PrmABCD. Requires Fe(2+) as cofactor.

It carries out the reaction propane + NADH + O2 + H(+) = propan-2-ol + NAD(+) + H2O. Functionally, component of the propane 2-monooxygenase multicomponent enzyme system which is involved in the degradation of propane via the O2-dependent hydroxylation of propane. Also able to catalyze the oxidation the water contaminant N-nitrosodimethylamine (NDMA). The chain is Propane 2-monooxygenase, hydroxylase component large subunit from Rhodococcus jostii (strain RHA1).